The following is a 147-amino-acid chain: Nucleoside diphosphate kinase (147 aa).

ATP is bound by residues Lys-9, Phe-57, Arg-85, Thr-91, Arg-102, and Asn-112. The Pros-phosphohistidine intermediate role is filled by His-115.

The protein belongs to the NDK family. Homotetramer. Requires Mg(2+) as cofactor.

The protein localises to the cytoplasm. It carries out the reaction a 2'-deoxyribonucleoside 5'-diphosphate + ATP = a 2'-deoxyribonucleoside 5'-triphosphate + ADP. It catalyses the reaction a ribonucleoside 5'-diphosphate + ATP = a ribonucleoside 5'-triphosphate + ADP. Functionally, major role in the synthesis of nucleoside triphosphates other than ATP. The ATP gamma phosphate is transferred to the NDP beta phosphate via a ping-pong mechanism, using a phosphorylated active-site intermediate. In Kosmotoga olearia (strain ATCC BAA-1733 / DSM 21960 / TBF 19.5.1), this protein is Nucleoside diphosphate kinase.